A 75-amino-acid chain; its full sequence is UPF0235 protein Ava_3894 (75 aa).

A disordered region spans residues 1 to 32 (MQKKVKVKPNSKQQKIAEQDDGSLTVHLKSPP).

This sequence belongs to the UPF0235 family.

This chain is UPF0235 protein Ava_3894, found in Trichormus variabilis (strain ATCC 29413 / PCC 7937) (Anabaena variabilis).